Here is a 341-residue protein sequence, read N- to C-terminus: ATPase GET3 (341 aa).

34 to 41 contributes to the ATP binding site; sequence KGGVGKTT. Aspartate 63 is a catalytic residue. Residues glutamate 245 and asparagine 272 each coordinate ATP. Residues cysteine 283 and cysteine 286 each contribute to the Zn(2+) site.

This sequence belongs to the arsA ATPase family. Homodimer.

Its subcellular location is the cytoplasm. It localises to the endoplasmic reticulum. Its function is as follows. ATPase required for the post-translational delivery of tail-anchored (TA) proteins to the endoplasmic reticulum. Recognizes and selectively binds the transmembrane domain of TA proteins in the cytosol. This complex then targets to the endoplasmic reticulum by membrane-bound receptors, where the tail-anchored protein is released for insertion. This process is regulated by ATP binding and hydrolysis. ATP binding drives the homodimer towards the closed dimer state, facilitating recognition of newly synthesized TA membrane proteins. ATP hydrolysis is required for insertion. Subsequently, the homodimer reverts towards the open dimer state, lowering its affinity for the membrane-bound receptor, and returning it to the cytosol to initiate a new round of targeting. The chain is ATPase GET3 from Ajellomyces capsulatus (strain G186AR / H82 / ATCC MYA-2454 / RMSCC 2432) (Darling's disease fungus).